The following is a 177-amino-acid chain: Large ribosomal subunit protein uL6 (177 aa).

This sequence belongs to the universal ribosomal protein uL6 family. As to quaternary structure, part of the 50S ribosomal subunit.

In terms of biological role, this protein binds to the 23S rRNA, and is important in its secondary structure. It is located near the subunit interface in the base of the L7/L12 stalk, and near the tRNA binding site of the peptidyltransferase center. This is Large ribosomal subunit protein uL6 from Shewanella baltica (strain OS223).